Here is a 1492-residue protein sequence, read N- to C-terminus: DNA-directed RNA polymerase subunit beta' (1492 aa).

Zn(2+) contacts are provided by C67, C69, C82, and C85. The Mg(2+) site is built by D499, D501, and D503. Positions 867, 943, 950, and 953 each coordinate Zn(2+).

The protein belongs to the RNA polymerase beta' chain family. As to quaternary structure, the RNAP catalytic core consists of 2 alpha, 1 beta, 1 beta' and 1 omega subunit. When a sigma factor is associated with the core the holoenzyme is formed, which can initiate transcription. Requires Mg(2+) as cofactor. Zn(2+) serves as cofactor.

It carries out the reaction RNA(n) + a ribonucleoside 5'-triphosphate = RNA(n+1) + diphosphate. Functionally, DNA-dependent RNA polymerase catalyzes the transcription of DNA into RNA using the four ribonucleoside triphosphates as substrates. In Chlorobium phaeobacteroides (strain DSM 266 / SMG 266 / 2430), this protein is DNA-directed RNA polymerase subunit beta'.